Consider the following 110-residue polypeptide: Large ribosomal subunit protein uL22 (110 aa).

This sequence belongs to the universal ribosomal protein uL22 family. As to quaternary structure, part of the 50S ribosomal subunit.

This protein binds specifically to 23S rRNA; its binding is stimulated by other ribosomal proteins, e.g. L4, L17, and L20. It is important during the early stages of 50S assembly. It makes multiple contacts with different domains of the 23S rRNA in the assembled 50S subunit and ribosome. Its function is as follows. The globular domain of the protein is located near the polypeptide exit tunnel on the outside of the subunit, while an extended beta-hairpin is found that lines the wall of the exit tunnel in the center of the 70S ribosome. This is Large ribosomal subunit protein uL22 from Nitrosomonas europaea (strain ATCC 19718 / CIP 103999 / KCTC 2705 / NBRC 14298).